A 461-amino-acid polypeptide reads, in one-letter code: MGMLRWGVESLQNPDELIPVLRMIYADKFGKIKPKDEDRGFCYEILNLVSRSFAIVIQQLPAQLRDPVCIFYLVLRALDTVEDDMKIAATTKIPLLRDFYEKISDRSFRMTAGDQKDYIRLLDQYPKVTSVFLKLTPREQEIIADITKRMGNGMADFVHKGVPDTVGDYDLYCHYVAGVVGLGLSQLFVASGLQSPSLTRSEDLSNHMGLFLQKTNIIRDYFEDINELPAPRMFWPREIWGKYANNLAEFKDPANKAAAMCCLNEMVTDALRHAVYCLQYMSMIEDPQIFNFCAIPQTMAFGTLSLCYNNYTIFTGPKAAVKLRRGTTAKLMYTSNNMFAMYRHFLNFAEKLEVRCNTETSEDPSVTTTLEHLHKIKAACKAGLARTKDDTFDELRSRLLALTGGSFYLAWTYNFLDLRGPGDLPTFLSVTQHWWSILIFLISIAVFFIPSRPSPRPTLSA.

Arg-51 and Arg-76 together coordinate NADP(+). Asp-79, Glu-82, and Asp-83 together coordinate Mg(2+). Residues Arg-219, Lys-322, and Arg-324 each contribute to the NADP(+) site. Residues 430 to 450 traverse the membrane as a helical segment; sequence VTQHWWSILIFLISIAVFFIP.

This sequence belongs to the phytoene/squalene synthase family. It depends on Mg(2+) as a cofactor.

The protein localises to the endoplasmic reticulum membrane. It carries out the reaction 2 (2E,6E)-farnesyl diphosphate + NADPH + H(+) = squalene + 2 diphosphate + NADP(+). The enzyme catalyses 2 (2E,6E)-farnesyl diphosphate + NADH + H(+) = squalene + 2 diphosphate + NAD(+). Its function is as follows. Converts farnesyl diphosphate (FPP) into squalene, a precursor for sterol biosynthesis in eukaryotes. Does not possess botryococcene synthase activity. This Botryococcus braunii (Green alga) protein is Squalene synthase BSS.